Reading from the N-terminus, the 25-residue chain is Caerin-2.3 (25 aa).

In terms of tissue distribution, expressed by the skin parotoid and/or rostral glands.

It is found in the secreted. Acts as a male sex pheromone that attracts females. Has no antimicrobial activity. The polypeptide is Caerin-2.3 (Ranoidea caerulea (Green tree frog)).